The primary structure comprises 704 residues: CAP-Gly domain-containing linker protein 4 (704 aa).

ANK repeat units lie at residues 65–101 (TSVSELFAILRQWVPQVQQNIDIIGNEILKRGCNVND), 149–180 (TNMNALHYASYFDVPELIRVILKTSKPKDVDA), and 186–215 (NFGTALHIAAHNLCAGAVKTLLELGANPAF). In terms of domain architecture, CAP-Gly 1 spans 303 to 345 (GTTEFASGQWAGIELDEPEGKNNGSVGRVQYFKCAPKYGIFAP). Residues 353 to 479 (KDGRKTTTHT…SATSAANNSH (127 aa)) form a disordered region. Composition is skewed to low complexity over residues 360–371 (THTPSTRATPHA), 423–432 (SMSSSSSSSS), and 440–461 (PKKLTTSSGGKKTLSKSPSLPS). Residues 504-546 (GTTNFAPGYWYGIELEKPHGKNDGSVGGVQYFSCSPRYGIFAP) form the CAP-Gly 2 domain. A phosphoserine mark is found at Ser556 and Ser608. Positions 643 to 685 (GPTDFASGIWLGLELRSAKGKNDGAVGDKRYFTCKPNYGVLVR) constitute a CAP-Gly 3 domain.

The sequence is that of CAP-Gly domain-containing linker protein 4 (Clip4) from Mus musculus (Mouse).